Here is a 201-residue protein sequence, read N- to C-terminus: Inosine triphosphate pyrophosphatase (201 aa).

16–21 (TGNAKK) contributes to the ITP binding site. Position 44 (Glu44) interacts with Mg(2+). Residues Lys56, 72 to 73 (DT), Lys89, 148 to 151 (FGWD), Lys171, and 176 to 177 (HR) each bind ITP.

It belongs to the HAM1 NTPase family. In terms of assembly, homodimer. Mg(2+) is required as a cofactor. Mn(2+) serves as cofactor.

It localises to the cytoplasm. It carries out the reaction ITP + H2O = IMP + diphosphate + H(+). The catalysed reaction is dITP + H2O = dIMP + diphosphate + H(+). The enzyme catalyses XTP + H2O = XMP + diphosphate + H(+). In terms of biological role, pyrophosphatase that hydrolyzes non-canonical purine nucleotides such as inosine triphosphate (ITP), deoxyinosine triphosphate (dITP) or xanthosine 5'-triphosphate (XTP) to their respective monophosphate derivatives. The enzyme does not distinguish between the deoxy- and ribose forms. Probably excludes non-canonical purines from RNA and DNA precursor pools, thus preventing their incorporation into RNA and DNA and avoiding chromosomal lesions. This is Inosine triphosphate pyrophosphatase from Zea mays (Maize).